The sequence spans 421 residues: UDP-N-acetylglucosamine 1-carboxyvinyltransferase 2 (421 aa).

22–23 provides a ligand contact to phosphoenolpyruvate; sequence KN. Residue Arg95 coordinates UDP-N-acetyl-alpha-D-glucosamine. The Proton donor role is filled by Cys119. 2-(S-cysteinyl)pyruvic acid O-phosphothioketal is present on Cys119. UDP-N-acetyl-alpha-D-glucosamine is bound by residues 124–128, Asp308, and Val330; that span reads RPIEQ.

The protein belongs to the EPSP synthase family. MurA subfamily.

It localises to the cytoplasm. It catalyses the reaction phosphoenolpyruvate + UDP-N-acetyl-alpha-D-glucosamine = UDP-N-acetyl-3-O-(1-carboxyvinyl)-alpha-D-glucosamine + phosphate. It participates in cell wall biogenesis; peptidoglycan biosynthesis. Cell wall formation. Adds enolpyruvyl to UDP-N-acetylglucosamine. This Staphylococcus haemolyticus (strain JCSC1435) protein is UDP-N-acetylglucosamine 1-carboxyvinyltransferase 2.